A 120-amino-acid polypeptide reads, in one-letter code: Crustacean hyperglycemic hormones 4 (120 aa).

The first 26 residues, 1–26 (MVALNTLSAVSAALLVLAASPSPASA), serve as a signal peptide directing secretion. Intrachain disulfides connect C53–C89, C69–C85, and C72–C98. The residue at position 118 (V118) is a Valine amide.

Belongs to the arthropod CHH/MIH/GIH/VIH hormone family.

It localises to the secreted. In terms of biological role, hormone found in the sinus gland of isopods and decapods which controls the blood sugar level. Has a secretagogue action over the amylase released from the midgut gland. May act as a stress hormone and may be involved in the control of molting and reproduction. The chain is Crustacean hyperglycemic hormones 4 (CHH4) from Penaeus monodon (Giant tiger prawn).